We begin with the raw amino-acid sequence, 331 residues long: NADH-cytochrome b5 reductase 2 (331 aa).

Residues 36 to 56 (VGILIASAVGMAGFGTYFMFG) form a helical membrane-spanning segment. Residues 80–185 (KGFVSLQLDD…KGPLPKYEWS (106 aa)) enclose the FAD-binding FR-type domain. Position 188–223 (188–223 (KHPHVAMIAGGTGITPMYQIMRAIFKNPADKTKVTL)) interacts with FAD.

This sequence belongs to the flavoprotein pyridine nucleotide cytochrome reductase family. Requires FAD as cofactor.

It localises to the mitochondrion outer membrane. It catalyses the reaction 2 Fe(III)-[cytochrome b5] + NADH = 2 Fe(II)-[cytochrome b5] + NAD(+) + H(+). Its function is as follows. May mediate the reduction of outer membrane cytochrome b5. This is NADH-cytochrome b5 reductase 2 (MCR1) from Pyricularia oryzae (strain 70-15 / ATCC MYA-4617 / FGSC 8958) (Rice blast fungus).